The primary structure comprises 65 residues: Large ribosomal subunit protein bL35 (65 aa).

The protein belongs to the bacterial ribosomal protein bL35 family.

This chain is Large ribosomal subunit protein bL35, found in Erwinia tasmaniensis (strain DSM 17950 / CFBP 7177 / CIP 109463 / NCPPB 4357 / Et1/99).